Here is a 1308-residue protein sequence, read N- to C-terminus: MGDPAPARSLDDIDLSALRDPAGIFELVEVVGNGTYGQVYKGRHVKTGQLAAIKVMDVTEDEEEEIKQEINMLKKYSHHRNIATYYGAFIKKSPPGNDDQLWLVMEFCGAGSVTDLVKNTKGNALKEDCIAYICREILRGLAHLHAHKVIHRDIKGQNVLLTENAEVKLVDFGVSAQLDRTVGRRNTFIGTPYWMAPEVIACDENPDATYDYRSDIWSLGITAIEMAEGAPPLCDMHPMRALFLIPRNPPPRLKSKKWSKKFTDFIDTCLIKTYLSRPPTEQLLKFPFIRDQPTERQVRIQLKDHIDRSRKKRGEKEETEYEYSGSEEEDDSHGEEGEPSSIMNVPGESTLRREFLRLQQENKSNSEALKQQQQLQQQQQRDPEAHIKHLLHQRQRRIEEQKEERRRVEEQQRREREQRKLQEKEQQRRLEDMQALRREEERRQAEREQEYKRKQLEEQRQSERLQRQLQQEHAYLKSLQQQQQQQQLQKQQQQQQQILPGDRKPLYHYGRGINPADKPAWAREVEERARMNKQQNSPLAKAKPSSAGPEPPISQASPSPPGPLSQTPPMQRPVEPQEGPHKSLVAHRVPLKPYAAPVPRSQSLQDQPTRNLAAFPASHDPDPAAVPTPTATPSARGAVIRQNSDPTSEGPGPSPNPPSWVRPDNEAPPKVPQRTSSIATALNTSGAGGSRPAQAVRASNPDLRRSDPGWERSDSVLPASHGHLPQAGSLERNRNRVGASTKLDSSPVLSPGNKAKPEDHRSRPGRPASYKRAIGEDFVLLKERTLDEAPKPPKKAMDYSSSSEEVESSEEEEEEGDGEPSEGSRDTPGGRSDGDTDSVSTMVVHDVEEISGTQPSYGGGTMVVQRTPEEERSLLLADSNGYTNLPDVVQPSHSPTENSKGQSPPTKDGGSDYQSRGLVKAPGKSSFTMFVDLGIYQPGGSGDTIPITALVGGEGGRLDQLQFDVRKGSVVNVNPTNTRAHSETPEIRKYKKRFNSEILCAALWGVNLLVGTENGLMLLDRSGQGKVYGLIGRRRFQQMDVLEGLNLLITISGKRNKLRVYYLSWLRNKILHNDPEVEKKQGWTTVGDMEGCGHYRVVKYERIKFLVIALKNSVEVYAWAPKPYHKFMAFKSFADLPHRPLLVDLTVEEGQRLKVIYGSSAGFHAVDVDSGNSYDIYIPVHIQSQITPHAIIFLPNTDGMEMLLCYEDEGVYVNTYGRIIKDVVLQWGEMPTSVAYICSNQIMGWGEKAIEIRSVETGHLDGVFMHKRAQRLKFLCERNDKVFFASVRSGGSSQVYFMTLNRNCIMNW.

The Protein kinase domain maps to 25–289 (FELVEVVGNG…TEQLLKFPFI (265 aa)). Residues 31-39 (VGNGTYGQV) and Lys-54 each bind ATP. Residue Asp-153 is the Proton acceptor of the active site. Disordered regions lie at residues 299–347 (RIQL…NVPG), 363–383 (KSNSEALKQQQQLQQQQQRDP), and 395–862 (QRRI…GGTM). Positions 317–333 (EETEYEYSGSEEEDDSH) are enriched in acidic residues. Phosphoserine occurs at positions 324 and 326. The span at 371-380 (QQQQLQQQQQ) shows a compositional bias: low complexity. Basic and acidic residues predominate over residues 396–466 (RRIEEQKEER…EEQRQSERLQ (71 aa)). Residues 479 to 497 (LQQQQQQQQLQKQQQQQQQ) show a composition bias toward low complexity. An omega-N-methylarginine mark is found at Arg-503 and Arg-511. The span at 520–530 (AWAREVEERAR) shows a compositional bias: basic and acidic residues. Residues 600-610 (RSQSLQDQPTR) are compositionally biased toward polar residues. Residues 623-633 (PAAVPTPTATP) are compositionally biased toward low complexity. Ser-644 is subject to Phosphoserine. Residues 673-685 (QRTSSIATALNTS) show a composition bias toward polar residues. Residues Asp-702, Ser-720, Ser-729, Ser-745, Ser-746, and Ser-750 each carry the phosphoserine modification. A compositionally biased stretch (basic and acidic residues) spans 702–714 (DLRRSDPGWERSD). Residues 773-797 (AIGEDFVLLKERTLDEAPKPPKKAM) show a composition bias toward basic and acidic residues. Positions 804-820 (EEVESSEEEEEEGDGEP) are enriched in acidic residues. Positions 842 to 1308 (MVVHDVEEIS…TLNRNCIMNW (467 aa)) are mediates interaction with RAP2A. Phosphothreonine is present on Thr-867. The disordered stretch occupies residues 881–918 (GYTNLPDVVQPSHSPTENSKGQSPPTKDGGSDYQSRGL). The span at 891-905 (PSHSPTENSKGQSPP) shows a compositional bias: polar residues. Positions 995–1282 (NSEILCAALW…KFLCERNDKV (288 aa)) constitute a CNH domain.

The protein belongs to the protein kinase superfamily. STE Ser/Thr protein kinase family. STE20 subfamily. As to quaternary structure, interacts with RAP2A and TANC1. Interacts with NCK1. The cofactor is Mg(2+). Autophosphorylated. As to expression, appears to be ubiquitous, expressed in all tissue types examined. Highly expressed in the brain, moderately expressed in kidney and spleen, low levels present in heart and skeletal muscle. Isoform 2 is more abundant in the brain than isoform 1.

The protein localises to the cytoplasm. It localises to the postsynaptic density. Its subcellular location is the cell projection. The protein resides in the axon. It is found in the dendrite. The enzyme catalyses L-seryl-[protein] + ATP = O-phospho-L-seryl-[protein] + ADP + H(+). It carries out the reaction L-threonyl-[protein] + ATP = O-phospho-L-threonyl-[protein] + ADP + H(+). In terms of biological role, serine/threonine kinase which acts as a negative regulator of Ras-related Rap2-mediated signal transduction to control neuronal structure and AMPA receptor trafficking. Required for normal synaptic density, dendrite complexity, as well as surface AMPA receptor expression in hippocampal neurons. Can activate the JNK and MAPK14/p38 pathways and mediates stimulation of the stress-activated protein kinase MAPK14/p38 MAPK downstream of the Raf/ERK pathway. Phosphorylates TANC1 upon stimulation by RAP2A, MBP and SMAD1. Has an essential function in negative selection of thymocytes, perhaps by coupling NCK1 to activation of JNK1. Activator of the Hippo signaling pathway which plays a pivotal role in organ size control and tumor suppression by restricting proliferation and promoting apoptosis. MAP4Ks act in parallel to and are partially redundant with STK3/MST2 and STK4/MST2 in the phosphorylation and activation of LATS1/2, and establish MAP4Ks as components of the expanded Hippo pathway. In Mus musculus (Mouse), this protein is Misshapen-like kinase 1.